Here is a 371-residue protein sequence, read N- to C-terminus: Capsular polysaccharide phosphotransferase cps12A (371 aa).

Belongs to the stealth family.

In terms of biological role, part of a capsular polysaccharide synthesis locus. This chain is Capsular polysaccharide phosphotransferase cps12A (cps12A), found in Actinobacillus pleuropneumoniae (Haemophilus pleuropneumoniae).